The following is a 212-amino-acid chain: Ion-translocating oxidoreductase complex subunit G (212 aa).

A helical transmembrane segment spans residues 9–29; that stretch reads ASLLGLFALLCTALVALVNQF. An FMN phosphoryl threonine modification is found at threonine 176.

This sequence belongs to the RnfG family. As to quaternary structure, the complex is composed of six subunits: RnfA, RnfB, RnfC, RnfD, RnfE and RnfG. FMN is required as a cofactor.

The protein localises to the cell inner membrane. Part of a membrane-bound complex that couples electron transfer with translocation of ions across the membrane. The chain is Ion-translocating oxidoreductase complex subunit G from Shewanella loihica (strain ATCC BAA-1088 / PV-4).